Consider the following 594-residue polypeptide: Proline--tRNA ligase (594 aa).

This sequence belongs to the class-II aminoacyl-tRNA synthetase family. ProS type 1 subfamily. In terms of assembly, homodimer.

Its subcellular location is the cytoplasm. It catalyses the reaction tRNA(Pro) + L-proline + ATP = L-prolyl-tRNA(Pro) + AMP + diphosphate. Catalyzes the attachment of proline to tRNA(Pro) in a two-step reaction: proline is first activated by ATP to form Pro-AMP and then transferred to the acceptor end of tRNA(Pro). As ProRS can inadvertently accommodate and process non-cognate amino acids such as alanine and cysteine, to avoid such errors it has two additional distinct editing activities against alanine. One activity is designated as 'pretransfer' editing and involves the tRNA(Pro)-independent hydrolysis of activated Ala-AMP. The other activity is designated 'posttransfer' editing and involves deacylation of mischarged Ala-tRNA(Pro). The misacylated Cys-tRNA(Pro) is not edited by ProRS. The polypeptide is Proline--tRNA ligase (Synechococcus sp. (strain WH7803)).